The primary structure comprises 171 residues: UPF0398 protein spyM18_1659 (171 aa).

It belongs to the UPF0398 family.

The chain is UPF0398 protein spyM18_1659 from Streptococcus pyogenes serotype M18 (strain MGAS8232).